Here is a 174-residue protein sequence, read N- to C-terminus: Protein GrpE (174 aa).

The protein belongs to the GrpE family. In terms of assembly, homodimer.

It is found in the cytoplasm. Participates actively in the response to hyperosmotic and heat shock by preventing the aggregation of stress-denatured proteins, in association with DnaK and GrpE. It is the nucleotide exchange factor for DnaK and may function as a thermosensor. Unfolded proteins bind initially to DnaJ; upon interaction with the DnaJ-bound protein, DnaK hydrolyzes its bound ATP, resulting in the formation of a stable complex. GrpE releases ADP from DnaK; ATP binding to DnaK triggers the release of the substrate protein, thus completing the reaction cycle. Several rounds of ATP-dependent interactions between DnaJ, DnaK and GrpE are required for fully efficient folding. The chain is Protein GrpE from Methanothermobacter thermautotrophicus (strain ATCC 29096 / DSM 1053 / JCM 10044 / NBRC 100330 / Delta H) (Methanobacterium thermoautotrophicum).